Here is a 342-residue protein sequence, read N- to C-terminus: Zinc transporter ZIP11 (342 aa).

7 helical membrane-spanning segments follow: residues 12 to 32 (LLGT…VFIF), 44 to 64 (LGFA…APAV), 72 to 92 (GFGA…AAFV), 194 to 214 (IALL…AVGV), 263 to 285 (FWYG…FAVV), 290 to 307 (ILPY…YVVM), and 322 to 342 (LASW…VGLG).

This sequence belongs to the ZIP transporter (TC 2.A.5) family. In terms of tissue distribution, highly expressed in the testes and portions of the digestive system including the stomach, ileum and cecum. In contrast, expressed at very low levels in liver, duodenum, jejunum, and colon.

It is found in the cell membrane. It localises to the nucleus. Its subcellular location is the cytoplasm. The protein resides in the golgi apparatus. The enzyme catalyses Zn(2+)(in) = Zn(2+)(out). The catalysed reaction is Cu(2+)(in) = Cu(2+)(out). In terms of biological role, zinc importer that regulates cytosolic zinc concentration either via zinc influx from the extracellular compartment or efflux from intracellular organelles such as Golgi apparatus. May transport copper ions as well. The transport mechanism remains to be elucidated. In Mus musculus (Mouse), this protein is Zinc transporter ZIP11 (Slc39a11).